We begin with the raw amino-acid sequence, 338 residues long: Methionine synthase (338 aa).

The Zn(2+) site is built by H210, C212, E234, and C294.

Belongs to the archaeal MetE family. The cofactor is Zn(2+).

It functions in the pathway amino-acid biosynthesis; L-methionine biosynthesis via de novo pathway. Its function is as follows. Catalyzes the transfer of a methyl group to L-homocysteine resulting in methionine formation. The physiological methyl donor is unknown. The protein is Methionine synthase of Pyrococcus abyssi (strain GE5 / Orsay).